Reading from the N-terminus, the 883-residue chain is Probable ribonuclease ZC3H12C (883 aa).

Disordered regions lie at residues 53-109 (QLSP…ISVE) and 139-158 (DFKP…PPDV). At Ser-230 the chain carries Phosphoserine. In terms of domain architecture, RNase NYN spans 245–400 (LRPIVIDGSN…LGRHGPSLDN (156 aa)). Residues 410–435 (EHKKQPCPYGKKCTYGHKCKYYHPER) form a C3H1-type zinc finger. Disordered regions lie at residues 456-551 (AKTA…FPPQ), 680-738 (FHDP…KAPH), and 754-775 (SRLY…EGLG). The span at 466–477 (KSNSVPCSTKAD) shows a compositional bias: polar residues. The span at 503–515 (LEEKLPTKNKLET) shows a compositional bias: basic and acidic residues. A compositionally biased stretch (polar residues) spans 517–542 (SVPSLVSIPATSTAKPQSTTSLSNGL). Low complexity predominate over residues 705 to 714 (HLALHLPHSA).

It belongs to the ZC3H12 family. The cofactor is Mg(2+).

In terms of biological role, may function as RNase and regulate the levels of target RNA species. This is Probable ribonuclease ZC3H12C (ZC3H12C) from Homo sapiens (Human).